The sequence spans 295 residues: Sulfotransferase 1A3 (295 aa).

Position 48–53 (48–53 (KSGTTW)) interacts with 3'-phosphoadenylyl sulfate. Dopamine is bound by residues Asp-86 and 106-108 (KSH). The active-site Proton acceptor is His-108. 3'-phosphoadenylyl sulfate is bound by residues Arg-130 and Ser-138. Position 146 (Glu-146) interacts with dopamine. 3'-phosphoadenylyl sulfate-binding positions include Tyr-193, 227-232 (TSFKEM), and 257-259 (RKG).

It belongs to the sulfotransferase 1 family. Homodimer. In terms of processing, the N-terminus is blocked. As to expression, liver, colon, kidney, lung, brain, spleen, small intestine, placenta and leukocyte.

It localises to the cytoplasm. The catalysed reaction is a phenol + 3'-phosphoadenylyl sulfate = an aryl sulfate + adenosine 3',5'-bisphosphate + H(+). It carries out the reaction 4-nitrophenol + 3'-phosphoadenylyl sulfate = 4-nitrophenyl sulfate + adenosine 3',5'-bisphosphate. The enzyme catalyses dopamine + 3'-phosphoadenylyl sulfate = dopamine 3-O-sulfate + adenosine 3',5'-bisphosphate + H(+). It catalyses the reaction dopamine + 3'-phosphoadenylyl sulfate = dopamine 4-O-sulfate + adenosine 3',5'-bisphosphate + H(+). The catalysed reaction is serotonin + 3'-phosphoadenylyl sulfate = serotonin O-sulfate + adenosine 3',5'-bisphosphate + H(+). It carries out the reaction (R)-adrenaline + 3'-phosphoadenylyl sulfate = (R)-adrenaline 4'-O-sulfate + adenosine 3',5'-bisphosphate + H(+). The enzyme catalyses (R)-noradrenaline + 3'-phosphoadenylyl sulfate = (R)-noradrenaline 4'-O-sulfate + adenosine 3',5'-bisphosphate + H(+). It catalyses the reaction 3,3',5-triiodo-L-thyronine + 3'-phosphoadenylyl sulfate = 3,3',5-triiodo-L-thyronine sulfate + adenosine 3',5'-bisphosphate + H(+). The catalysed reaction is 3,3',5'-triiodo-L-thyronine + 3'-phosphoadenylyl sulfate = 3,3',5'-triiodo-L-thyronine sulfate + adenosine 3',5'-bisphosphate + H(+). It carries out the reaction 3,3'-diiodo-L-thyronine + 3'-phosphoadenylyl sulfate = 3,3'-diiodo-L-thyronine sulfate + adenosine 3',5'-bisphosphate + H(+). The enzyme catalyses L-thyroxine + 3'-phosphoadenylyl sulfate = L-thyroxine sulfate + adenosine 3',5'-bisphosphate + H(+). Functionally, sulfotransferase that utilizes 3'-phospho-5'-adenylyl sulfate (PAPS) as sulfonate donor to catalyze the sulfate conjugation of phenolic monoamines (neurotransmitters such as dopamine, (R)-adrenaline/epinephrine, (R)-noradrenaline/norepinephrine and serotonin) and phenolic and catechol drugs. Catalyzes the sulfation of T4 (L-thyroxine/3,5,3',5'-tetraiodothyronine), T3 (3,5,3'-triiodothyronine), rT3 (3,3',5'-triiodothyronine) and 3,3'-T2 (3,3'-diiodothyronine), with a substrate preference of 3,3'-T2 &gt; rT3 &gt; T3 &gt; T4. The polypeptide is Sulfotransferase 1A3 (SULT1A3) (Homo sapiens (Human)).